We begin with the raw amino-acid sequence, 516 residues long: Putative F-box and FNIP repeat-containing protein L414 (516 aa).

One can recognise an F-box domain in the interval 4–49 (INDLNMDVILHLLTFLTDKNKLNFMMTCTHLYQFISCVKYNNFQLF). FNIP repeat units lie at residues 123-165 (FNHT…FGEN), 166-208 (FNKM…LMYS), 341-383 (YNPK…NFNG), 385-428 (YDNI…FGKL), and 429-470 (YNKP…FGYM).

The sequence is that of Putative F-box and FNIP repeat-containing protein L414 from Acanthamoeba polyphaga (Amoeba).